Consider the following 397-residue polypeptide: Acetate kinase 2 (397 aa).

Position 10 (Asn10) interacts with Mg(2+). Lys17 provides a ligand contact to ATP. Arg90 provides a ligand contact to substrate. Catalysis depends on Asp147, which acts as the Proton donor/acceptor. ATP is bound by residues 207–211 (HLGNG), 281–283 (DCR), and 329–333 (GIGEN). Glu383 contributes to the Mg(2+) binding site.

The protein belongs to the acetokinase family. In terms of assembly, homodimer. It depends on Mg(2+) as a cofactor. Requires Mn(2+) as cofactor.

It is found in the cytoplasm. The catalysed reaction is acetate + ATP = acetyl phosphate + ADP. It participates in metabolic intermediate biosynthesis; acetyl-CoA biosynthesis; acetyl-CoA from acetate: step 1/2. Its function is as follows. Catalyzes the formation of acetyl phosphate from acetate and ATP. Can also catalyze the reverse reaction. This chain is Acetate kinase 2, found in Photobacterium profundum (strain SS9).